A 197-amino-acid chain; its full sequence is dTTP/UTP pyrophosphatase (197 aa).

Residue aspartate 70 is the Proton acceptor of the active site.

It belongs to the Maf family. YhdE subfamily. It depends on a divalent metal cation as a cofactor.

Its subcellular location is the cytoplasm. The catalysed reaction is dTTP + H2O = dTMP + diphosphate + H(+). The enzyme catalyses UTP + H2O = UMP + diphosphate + H(+). Functionally, nucleoside triphosphate pyrophosphatase that hydrolyzes dTTP and UTP. May have a dual role in cell division arrest and in preventing the incorporation of modified nucleotides into cellular nucleic acids. The protein is dTTP/UTP pyrophosphatase (yceF) of Shigella dysenteriae serotype 1 (strain Sd197).